A 277-amino-acid polypeptide reads, in one-letter code: Diaminopimelate epimerase (277 aa).

The substrate site is built by asparagine 13, glutamine 46, and asparagine 66. The Proton donor role is filled by cysteine 75. Substrate contacts are provided by residues 76–77 (GN), asparagine 160, asparagine 193, and 211–212 (ER). The active-site Proton acceptor is the cysteine 220. 221–222 (GT) is a substrate binding site.

The protein belongs to the diaminopimelate epimerase family. In terms of assembly, homodimer.

The protein localises to the cytoplasm. It carries out the reaction (2S,6S)-2,6-diaminopimelate = meso-2,6-diaminopimelate. It participates in amino-acid biosynthesis; L-lysine biosynthesis via DAP pathway; DL-2,6-diaminopimelate from LL-2,6-diaminopimelate: step 1/1. In terms of biological role, catalyzes the stereoinversion of LL-2,6-diaminopimelate (L,L-DAP) to meso-diaminopimelate (meso-DAP), a precursor of L-lysine and an essential component of the bacterial peptidoglycan. This chain is Diaminopimelate epimerase, found in Saccharophagus degradans (strain 2-40 / ATCC 43961 / DSM 17024).